Here is a 215-residue protein sequence, read N- to C-terminus: Adenylate kinase (215 aa).

Residue 10–15 (GAGKGT) coordinates ATP. An NMP region spans residues 30 to 59 (STGDMLREAVAAGTELGKKVKEIIEKGLLV). Residues T31, R36, 57–59 (LLV), 85–88 (GFPR), and Q92 contribute to the AMP site. The LID stretch occupies residues 126 to 163 (SRRVCPSCGKVYNLLTIKPKNDMLCDDCNIGLIQREDD). An ATP-binding site is contributed by R127. Zn(2+)-binding residues include C130 and C133. Position 136–137 (136–137 (VY)) interacts with ATP. Residues C150 and C153 each contribute to the Zn(2+) site. R160 and R171 together coordinate AMP. L199 provides a ligand contact to ATP.

It belongs to the adenylate kinase family. As to quaternary structure, monomer.

Its subcellular location is the cytoplasm. The catalysed reaction is AMP + ATP = 2 ADP. It participates in purine metabolism; AMP biosynthesis via salvage pathway; AMP from ADP: step 1/1. Functionally, catalyzes the reversible transfer of the terminal phosphate group between ATP and AMP. Plays an important role in cellular energy homeostasis and in adenine nucleotide metabolism. This is Adenylate kinase from Kosmotoga olearia (strain ATCC BAA-1733 / DSM 21960 / TBF 19.5.1).